Consider the following 82-residue polypeptide: Probable [Fe-S]-dependent transcriptional repressor (82 aa).

Residues Cys-56, Cys-61, Cys-64, and Cys-71 each contribute to the iron-sulfur cluster site.

This sequence belongs to the FeoC family.

In terms of biological role, may function as a transcriptional regulator that controls feoABC expression. This chain is Probable [Fe-S]-dependent transcriptional repressor, found in Yersinia enterocolitica serotype O:8 / biotype 1B (strain NCTC 13174 / 8081).